Reading from the N-terminus, the 533-residue chain is uncharacterized protein (533 aa).

The next 4 membrane-spanning stretches (helical) occupy residues 1–21 (MLAFPYLMTMITPPTFDVAFI), 135–155 (LPRFLFGVFLSEQMIAAIAAL), 193–213 (AIAAGKVVVAIGSPPTKAILA), and 472–492 (LLVNDDFEASPGFCVIGPLVG).

The protein localises to the cell membrane. This is an uncharacterized protein from Mycobacterium bovis (strain ATCC BAA-935 / AF2122/97).